We begin with the raw amino-acid sequence, 286 residues long: Polygalacturonan/rhamnogalacturonan transport system permease protein YtcP (286 aa).

6 helical membrane-spanning segments follow: residues 9-29 (LIYG…IHVI), 69-89 (LLVS…LSSL), 106-126 (MFLV…FLVV), 131-151 (LLDS…NLII), 176-196 (GIFF…ISLF), and 251-271 (TIKM…YPFI). Residues 69 to 271 (LLVSVFVTVI…IPVLLVYPFI (203 aa)) form the ABC transmembrane type-1 domain.

It belongs to the binding-protein-dependent transport system permease family. CysTW subfamily. In terms of assembly, the complex is probably composed of two ATP-binding proteins (MsmX), two transmembrane proteins (YtcP and YteP) and a solute-binding protein (YtcQ).

It is found in the cell membrane. In terms of biological role, involved in pectin degradation. Part of the ABC transporter complex YtcQP-YteP involved in the uptake of polygalacturonan and rhamnogalacturonan type I. Responsible for the translocation of the substrate across the membrane. The polypeptide is Polygalacturonan/rhamnogalacturonan transport system permease protein YtcP (ytcP) (Bacillus subtilis (strain 168)).